Consider the following 557-residue polypeptide: MTDNNKYRDVEIRAPRGNKLTAKSWLTEAPLRMLMNNLDPQVAENPKELVVYGGIGRAARNWECYDKIVETLTRLEDDETLLVQSGKPVGVFKTHSNAPRVLIANSNLVPHWANWEHFNELDAKGLAMYGQMTAGSWIYIGSQGIVQGTYETFVEAGRQHYGGSLKGKWVLTAGLGGMGGAQPLAATLAGACSLNIECQQSRIDFRLETRYVDEQATDLDDALARIAKYTAEGKAISIALHGNAAEILPELVKRGVRPDMVTDQTSAHDPLNGYLPAGWTWEQYRDRAQTEPAAVVKAAKQSMAVHVQAMLDFQKQGIPTFDYGNNIRQMAKEEGVANAFDFPGFVPAYIRPLFCRGIGPFRWAALSGEAEDIYKTDAKVKELIPDDAHLHRWLDMARERISFQGLPARICWVGLGLRAKLGLAFNEMVRSGELSAPVVIGRDHLDSGSVSSPNRETEAMRDGSDAVSDWPLLNALLNTAGGATWVSLHHGGGVGMGFSQHSGMVIVCDGTDEAAERIARVLTNDPGTGVMRHADAGYDIAIDCAKEQGLDLPMITG.

Residues 53-54, Gln131, 177-179, Glu197, Arg202, 243-244, 264-268, 274-275, and Tyr323 each bind NAD(+); these read GG, GMG, NA, QTSAH, and YL. The active site involves Cys411. Gly493 provides a ligand contact to NAD(+).

Belongs to the urocanase family. NAD(+) is required as a cofactor.

The protein localises to the cytoplasm. The enzyme catalyses 4-imidazolone-5-propanoate = trans-urocanate + H2O. The protein operates within amino-acid degradation; L-histidine degradation into L-glutamate; N-formimidoyl-L-glutamate from L-histidine: step 2/3. Functionally, catalyzes the conversion of urocanate to 4-imidazolone-5-propionate. In Pseudomonas putida (strain GB-1), this protein is Urocanate hydratase.